A 449-amino-acid chain; its full sequence is Serum response factor homolog (449 aa).

Positions 23–166 are disordered; it reads LADPADMYGN…PPANGKKTKG (144 aa). Over residues 69–80 the composition is skewed to polar residues; sequence QCQTLHSPQHAS. The segment covering 81 to 107 has biased composition (low complexity); the sequence is QQQQQQQQQQQQHQQQQQQQQQHPQQQ. At Ser-156 the chain carries Phosphoserine. The MADS-box domain occupies 167–225; sequence RVKIKMEYIDNKLRRYTTFSKRKTGIMKKAYELSTLTGTQVMLLVASETGHVYTFATRK. 2 disordered regions span residues 270-360 and 418-449; these read YNIA…GGGS and LTAS…QEFD. Composition is skewed to low complexity over residues 317 to 331 and 345 to 354; these read SAPP…TASS and TNSGPSTSTA.

In terms of tissue distribution, after germ band retraction, high levels of zygotic expression are observed in a distinct subset of peripheral tracheal cells distributed throughout the embryo and low levels in somatic muscle. Expressed in the future intervein tissue of the wing imaginal disk from the third instar larvae until eclosion of the adult fly (at protein level).

Its subcellular location is the nucleus. Functionally, required for the formation of intervein tissue of the wing. Acts in a dosage-dependent manner to suppress wing vein formation and promote development of intervein cells. Might play a role in the proper formation and maintenance of the trachea. The protein is Serum response factor homolog (bs) of Drosophila melanogaster (Fruit fly).